We begin with the raw amino-acid sequence, 51 residues long: Sperm protamine P1 (51 aa).

It belongs to the protamine P1 family. Cross-linked by interchain disulfide bonds around the DNA-helix. In terms of tissue distribution, testis.

It localises to the nucleus. The protein resides in the chromosome. Protamines substitute for histones in the chromatin of sperm during the haploid phase of spermatogenesis. They compact sperm DNA into a highly condensed, stable and inactive complex. The protein is Sperm protamine P1 (PRM1) of Hylobates lar (Lar gibbon).